We begin with the raw amino-acid sequence, 334 residues long: Glutaredoxin-3 (334 aa).

Ala-2 carries the N-acetylalanine modification. In terms of domain architecture, Thioredoxin spans 2 to 116 (AGGAAEAAAA…LTKKVQRHAS (115 aa)). The segment at 110–131 (KVQRHASSGSFSPSGSEHPKED) is disordered. 2 positions are modified to phosphoserine: Ser-116 and Ser-119. Residues 116–125 (SSGSFSPSGS) show a composition bias toward low complexity. Glutaredoxin domains follow at residues 145–235 (CMLF…PKLE) and 236–334 (ERLK…KGEN). [2Fe-2S] cluster contacts are provided by Cys-158 and Cys-260.

Homodimer; the homodimer is independent of 2Fe-2S clusters. Heterotrimer; forms a heterotrimeric complex composed by two BOLA2 molecules and one GLRX3 molecule; linked by [2Fe-2S] clusters. Interacts (via N-terminus) with PRKCQ/PKC-theta. Interacts (via C-terminus) with CSRP3. Interacts with CSRP2.

Its subcellular location is the cytoplasm. The protein localises to the cytosol. The protein resides in the cell cortex. It localises to the myofibril. It is found in the sarcomere. Its subcellular location is the z line. Its function is as follows. Together with BOLA2, acts as a cytosolic iron-sulfur (Fe-S) cluster assembly factor that facilitates [2Fe-2S] cluster insertion into a subset of cytosolic proteins. Acts as a critical negative regulator of cardiac hypertrophy and a positive inotropic regulator. Required for hemoglobin maturation. Does not possess any thyoredoxin activity since it lacks the conserved motif that is essential for catalytic activity. The polypeptide is Glutaredoxin-3 (GLRX3) (Bos taurus (Bovine)).